A 569-amino-acid chain; its full sequence is 4-coumarate-CoA ligase 2 (569 aa).

Residues 1–24 (MITIAESHPQIHHSPPDTTAPSTP) are disordered. Residues 216–220 (SSGTT), H265, 337–339 (AAP), 359–360 (QG), T364, D448, R463, and K554 each bind ATP. The segment at 290-359 (EMEGMLETIQ…GRLPQAVLGQ (70 aa)) is SBD1. The tract at residues 360–427 (GYGMTEAGPV…VRGPQIMKGY (68 aa)) is SBD2.

This sequence belongs to the ATP-dependent AMP-binding enzyme family. Mostly expressed in stems, and, to a lower extent, in bulbs.

The catalysed reaction is (E)-4-coumarate + ATP + CoA = (E)-4-coumaroyl-CoA + AMP + diphosphate. The protein operates within phytoalexin biosynthesis; 3,4',5-trihydroxystilbene biosynthesis; 3,4',5-trihydroxystilbene from trans-4-coumarate: step 1/2. Its function is as follows. Produces CoA thioesters of a variety of hydroxy- and methoxy-substituted cinnamic acids, which are used to synthesize several phenylpropanoid-derived compounds, including anthocyanins, flavonoids, isoflavonoids, coumarins, lignin, suberin and wall-bound phenolics. The protein is 4-coumarate-CoA ligase 2 of Narcissus pseudonarcissus (Daffodil).